We begin with the raw amino-acid sequence, 206 residues long: LexA repressor (206 aa).

Residues 28–48 (RAEIAKRLGFKSANAAEEHLK) constitute a DNA-binding region (H-T-H motif). Residues S123 and K160 each act as for autocatalytic cleavage activity in the active site.

This sequence belongs to the peptidase S24 family. As to quaternary structure, homodimer.

It carries out the reaction Hydrolysis of Ala-|-Gly bond in repressor LexA.. In terms of biological role, represses a number of genes involved in the response to DNA damage (SOS response), including recA and lexA. In the presence of single-stranded DNA, RecA interacts with LexA causing an autocatalytic cleavage which disrupts the DNA-binding part of LexA, leading to derepression of the SOS regulon and eventually DNA repair. This is LexA repressor from Shewanella sediminis (strain HAW-EB3).